The primary structure comprises 29 residues: Brevinin-2Rd (29 aa).

C23 and C29 form a disulfide bridge.

As to expression, expressed by the skin glands.

It localises to the secreted. Functionally, antimicrobial peptide. The chain is Brevinin-2Rd from Pelophylax ridibundus (Marsh frog).